The chain runs to 423 residues: FAD-dependent monooxygenase asL6 (423 aa).

FAD is bound by residues 10–13 (AGVA), 34–35 (ER), R108, Y290, and D312. The helical transmembrane segment at 371–391 (GMGMFQSKFGVGVFYVLLAII) threads the bilayer.

Belongs to the aromatic-ring hydroxylase family. The cofactor is FAD.

It localises to the membrane. It functions in the pathway secondary metabolite biosynthesis; terpenoid biosynthesis. Functionally, FAD-dependent monooxygenase; part of the gene cluster that mediates the biosynthesis of xenovulene A, an unusual meroterpenoid that has potent inhibitory effects on the human gamma-aminobutyrate A (GABAA) benzodiazepine receptor. The first step of xenovulene A biosynthesis is the biosynthesis of 3-methylorcinaldehyde performed by the non-reducing polyketide synthase aspks1. The salicylate hydroxylase asL1 then catalyzes the oxidative dearomatization of 3-methylorcinaldehyde to yield a dearomatized hydroxycyclohexadione. The 2-oxoglutarate-dependent dioxygenase asL3 further catalyzes the oxidative ring expansion to provide the first tropolone metabolite. The cytochrome P450 monooxygenase asR2 allows the synthesis of tropolone hemiacetal. In parallel, a previously unrecognised class of terpene cyclase, asR6, produces alpha-humulene from farnesylpyrophosphate (FPP). The putative Diels-Alderase asR5 probably catalyzes the formation of the tropolone-humulene skeleton by linking humulene and the polyketide moiety. Oxidative-ring contractions catalyzed by asL4 and asL6 then processively remove carbon atoms from the polyketide to yield xenovulene A. This Sarocladium schorii (Acremonium strictum (strain IMI 501407)) protein is FAD-dependent monooxygenase asL6.